Here is a 205-residue protein sequence, read N- to C-terminus: Holliday junction branch migration complex subunit RuvA (205 aa).

The tract at residues 1-65 (MIAKLKGILD…EDRIHLFGFL (65 aa)) is domain I. The interval 66-144 (DNTEKVAFNM…NINTIANNTS (79 aa)) is domain II. The segment at 145–153 (LAILSTDSN) is flexible linker. Residues 154 to 205 (THDNILSDAITALIALGISRAEATQILSDIYALFPSISVNELVRTALQRRAK) are domain III.

Belongs to the RuvA family. In terms of assembly, homotetramer. Forms an RuvA(8)-RuvB(12)-Holliday junction (HJ) complex. HJ DNA is sandwiched between 2 RuvA tetramers; dsDNA enters through RuvA and exits via RuvB. An RuvB hexamer assembles on each DNA strand where it exits the tetramer. Each RuvB hexamer is contacted by two RuvA subunits (via domain III) on 2 adjacent RuvB subunits; this complex drives branch migration. In the full resolvosome a probable DNA-RuvA(4)-RuvB(12)-RuvC(2) complex forms which resolves the HJ.

The protein resides in the cytoplasm. In terms of biological role, the RuvA-RuvB-RuvC complex processes Holliday junction (HJ) DNA during genetic recombination and DNA repair, while the RuvA-RuvB complex plays an important role in the rescue of blocked DNA replication forks via replication fork reversal (RFR). RuvA specifically binds to HJ cruciform DNA, conferring on it an open structure. The RuvB hexamer acts as an ATP-dependent pump, pulling dsDNA into and through the RuvAB complex. HJ branch migration allows RuvC to scan DNA until it finds its consensus sequence, where it cleaves and resolves the cruciform DNA. The sequence is that of Holliday junction branch migration complex subunit RuvA from Orientia tsutsugamushi (strain Boryong) (Rickettsia tsutsugamushi).